Here is a 199-residue protein sequence, read N- to C-terminus: Recombination protein RecR (199 aa).

The segment at 56–71 (CQQCNNYTEQTLCALC) adopts a C4-type zinc-finger fold. The Toprim domain maps to 79 to 174 (TLLCVVESPA…NISQLAHGIP (96 aa)).

This sequence belongs to the RecR family.

Functionally, may play a role in DNA repair. It seems to be involved in an RecBC-independent recombinational process of DNA repair. It may act with RecF and RecO. The protein is Recombination protein RecR of Legionella pneumophila subsp. pneumophila (strain Philadelphia 1 / ATCC 33152 / DSM 7513).